A 194-amino-acid chain; its full sequence is PRELI domain containing protein 3B (194 aa).

The 172-residue stretch at 1 to 172 (MKIWTSEHVF…VIHKLNAEIE (172 aa)) folds into the PRELI/MSF1 domain. Ser-46 and Ser-51 each carry phosphoserine.

Belongs to the slowmo family.

The polypeptide is PRELI domain containing protein 3B (PRELID3B) (Macaca fascicularis (Crab-eating macaque)).